The chain runs to 643 residues: Nucleolar GTP-binding protein 1 (643 aa).

One can recognise an OBG-type G domain in the interval 168-340 (RTLLICGYPN…VRNKACEKLL (173 aa)). GTP is bound by residues 174 to 181 (GYPNVGKS), 220 to 224 (DTPGI), and 288 to 291 (NKTD). The segment at 568–643 (GDQEDSAPAG…KRGVGKTDFR (76 aa)) is disordered. Positions 594–622 (MRSKAERMAKLERRERNRMARAGESDRHA) are enriched in basic and acidic residues.

Belongs to the TRAFAC class OBG-HflX-like GTPase superfamily. OBG GTPase family. NOG subfamily.

The protein localises to the nucleus. The protein resides in the nucleolus. In terms of biological role, involved in the biogenesis of the 60S ribosomal subunit. This Kluyveromyces lactis (strain ATCC 8585 / CBS 2359 / DSM 70799 / NBRC 1267 / NRRL Y-1140 / WM37) (Yeast) protein is Nucleolar GTP-binding protein 1 (NOG1).